The following is a 599-amino-acid chain: Elongation factor 4 (599 aa).

The tr-type G domain maps to 4-186; the sequence is EHIRNFSIIA…EIVKKIPPPK (183 aa). GTP-binding positions include 16–21 and 133–136; these read DHGKST and NKID.

It belongs to the TRAFAC class translation factor GTPase superfamily. Classic translation factor GTPase family. LepA subfamily.

Its subcellular location is the cell inner membrane. The catalysed reaction is GTP + H2O = GDP + phosphate + H(+). Required for accurate and efficient protein synthesis under certain stress conditions. May act as a fidelity factor of the translation reaction, by catalyzing a one-codon backward translocation of tRNAs on improperly translocated ribosomes. Back-translocation proceeds from a post-translocation (POST) complex to a pre-translocation (PRE) complex, thus giving elongation factor G a second chance to translocate the tRNAs correctly. Binds to ribosomes in a GTP-dependent manner. The protein is Elongation factor 4 of Citrifermentans bemidjiense (strain ATCC BAA-1014 / DSM 16622 / JCM 12645 / Bem) (Geobacter bemidjiensis).